A 451-amino-acid chain; its full sequence is Enolase (451 aa).

Q163 serves as a coordination point for (2R)-2-phosphoglycerate. Catalysis depends on E205, which acts as the Proton donor. Residues D258, E308, and D335 each coordinate Mg(2+). (2R)-2-phosphoglycerate is bound by residues K360, R389, S390, and K411. K360 functions as the Proton acceptor in the catalytic mechanism.

This sequence belongs to the enolase family. It depends on Mg(2+) as a cofactor.

It localises to the cytoplasm. The protein resides in the secreted. Its subcellular location is the cell surface. It carries out the reaction (2R)-2-phosphoglycerate = phosphoenolpyruvate + H2O. The protein operates within carbohydrate degradation; glycolysis; pyruvate from D-glyceraldehyde 3-phosphate: step 4/5. Its function is as follows. Catalyzes the reversible conversion of 2-phosphoglycerate (2-PG) into phosphoenolpyruvate (PEP). It is essential for the degradation of carbohydrates via glycolysis. The chain is Enolase from Mycoplasma capricolum subsp. capricolum (strain California kid / ATCC 27343 / NCTC 10154).